Reading from the N-terminus, the 421-residue chain is MNTLQRRKTHQVRIDHITVGSEAPVVIQSMTNTDTADAKATALQIKELSDAGSEMVRITVNSPEAASKVAEIRRRLDDMGYATPLIGDFHFNGERLLAEFPECGKALSKYRINPGNVGKGVKGDEKFAFMIRTAAENDKAVRIGVNWGSLDQSLAKRMMDANLASSAPKPPEEVTKEALIVSALESAEKAVLLGLPEDKIILSCKVSAVQDLIQVYRELGSRCAYPLHLGLTEAGMGSKGIVASTAALSVLLQEGIGDTIRISLTPEPGSPRTQEVVVGQEILQTMGLRSFTPMVTACPGCGRTTSTVFQELAQDVQNYLRQKMSIWRTLYPGVESLNVAVMGCVVNGPGESKLADIGISLPGTGETPVAPVYVDGERKVTLKGDNIATEFLAIVEEYVKTNYGENGSKRNQNKIIPIQSL.

C298, C301, C344, and E351 together coordinate [4Fe-4S] cluster.

This sequence belongs to the IspG family. It depends on [4Fe-4S] cluster as a cofactor.

The catalysed reaction is (2E)-4-hydroxy-3-methylbut-2-enyl diphosphate + oxidized [flavodoxin] + H2O + 2 H(+) = 2-C-methyl-D-erythritol 2,4-cyclic diphosphate + reduced [flavodoxin]. It participates in isoprenoid biosynthesis; isopentenyl diphosphate biosynthesis via DXP pathway; isopentenyl diphosphate from 1-deoxy-D-xylulose 5-phosphate: step 5/6. Its function is as follows. Converts 2C-methyl-D-erythritol 2,4-cyclodiphosphate (ME-2,4cPP) into 1-hydroxy-2-methyl-2-(E)-butenyl 4-diphosphate. The sequence is that of 4-hydroxy-3-methylbut-2-en-1-yl diphosphate synthase (flavodoxin) from Neisseria meningitidis serogroup C (strain 053442).